Reading from the N-terminus, the 63-residue chain is MKAAELRNKTQEELGDELISLLKEQFNLRMRKATGQLNQVHLLRKVRRDIARVKTVLNQKAGE.

The protein belongs to the universal ribosomal protein uL29 family.

This chain is Large ribosomal subunit protein uL29, found in Hahella chejuensis (strain KCTC 2396).